The sequence spans 231 residues: Ribonuclease 3 (231 aa).

The 130-residue stretch at 5–134 folds into the RNase III domain; sequence QKGIKEDFGI…FIGALYKDQG (130 aa). Mg(2+) is bound at residue E47. The active site involves D51. Mg(2+) contacts are provided by D120 and E123. The active site involves E123. Residues 160–230 enclose the DRBM domain; sequence DYKSKLQELL…AKKAYQDVTP (71 aa).

Belongs to the ribonuclease III family. As to quaternary structure, homodimer. It depends on Mg(2+) as a cofactor.

It localises to the cytoplasm. The catalysed reaction is Endonucleolytic cleavage to 5'-phosphomonoester.. Digests double-stranded RNA. Involved in the processing of primary rRNA transcript to yield the immediate precursors to the large and small rRNAs (23S and 16S). Processes some mRNAs, and tRNAs when they are encoded in the rRNA operon. Processes pre-crRNA and tracrRNA of type II CRISPR loci if present in the organism. This Oenococcus oeni (strain ATCC BAA-331 / PSU-1) protein is Ribonuclease 3.